Reading from the N-terminus, the 143-residue chain is Large ribosomal subunit protein uL15 (143 aa).

A disordered region spans residues 1-54; the sequence is MELNSIKPADGAKHAARRVGRGIGSGLGKTAGRGHKGQKSRSGGYHKVGFEGGQ. Over residues 21 to 31 the composition is skewed to gly residues; that stretch reads RGIGSGLGKTA.

This sequence belongs to the universal ribosomal protein uL15 family. Part of the 50S ribosomal subunit.

In terms of biological role, binds to the 23S rRNA. This chain is Large ribosomal subunit protein uL15, found in Acidovorax ebreus (strain TPSY) (Diaphorobacter sp. (strain TPSY)).